A 1038-amino-acid polypeptide reads, in one-letter code: Importin-7 (1038 aa).

An N-acetylmethionine modification is found at M1. An Importin N-terminal domain is found at 22–101 (AERQLNEAHK…RENIVEAIIH (80 aa)). Residues 881-910 (EHENDSDDDEDAEDDDETEELGSDEDDIDE) are disordered. The span at 884 to 910 (NDSDDDEDAEDDDETEELGSDEDDIDE) shows a compositional bias: acidic residues. A Phosphoserine modification is found at S886. A Phosphothreonine modification is found at T898. 2 positions are modified to phosphoserine: S903 and S1020.

It belongs to the importin beta family. In terms of assembly, forms a heterodimer with KPNB1. Interacts with histone H1. Interacts with H2A, H2B, H3 and H4 histones. Interacts with SNUPN and XPO1. Interacts with RPS7 and RPL5. Interacts with RPL23A (via BIB domain). Binds directly to nuclear pore complexes. Interacts with SMAD4 and NUP93; translocates SMAD4 to the nucleus through the NPC upon BMP7 stimulation resulting in activation of SMAD4 signaling. Interacts with phosphorylated SMAD2; the interaction facilitates translocation of SMAD2 to the nucleus. Interacts with SRP19. Interacts with RUNX2; the interaction inhibits RUNX2 nuclear translocation in osteoblasts. Interacts with HDAC6, DLX3 and KLF4; the interaction facilitates HDAC6, DLX3 and KLF4 nuclear translocation in dental papilla cells.

The protein localises to the cytoplasm. Its subcellular location is the nucleus. Its function is as follows. Functions in nuclear protein import, either by acting as autonomous nuclear transport receptor or as an adapter-like protein in association with the importin-beta subunit KPNB1. Acting autonomously is thought to serve itself as receptor for nuclear localization signals (NLS) and to promote translocation of import substrates through the nuclear pore complex (NPC) by an energy requiring, Ran-dependent mechanism. At the nucleoplasmic side of the NPC, Ran binds to importin, the importin/substrate complex dissociates and importin is re-exported from the nucleus to the cytoplasm where GTP hydrolysis releases Ran. Mediates autonomously the nuclear import of ribosomal proteins RPL23A, RPS7 and RPL5. In association with KPNB1 mediates the nuclear import of H1 histone and the Ran-binding site of IPO7 is not required but synergizes with that of KPNB1 in importin/substrate complex dissociation. Promotes odontoblast differentiation via promoting nuclear translocation of DLX3, KLF4, SMAD2, thereby facilitating the transcription of target genes that play a role in odontoblast differentiation. Facilitates BMP4-induced translocation of SMAD1 to the nucleus and recruitment to the MSX1 gene promoter, thereby promotes the expression of the odontogenic regulator MSX1 in dental mesenchymal cells. Also promotes odontoblast differentiation by facilitating the nuclear translocation of HDAC6 and subsequent repression of RUNX2 expression. Inhibits osteoblast differentiation by inhibiting nuclear translocation of RUNX2 and therefore inhibition of RUNX2 target gene transcription. In vitro, mediates nuclear import of H2A, H2B, H3 and H4 histones. The chain is Importin-7 (Ipo7) from Mus musculus (Mouse).